A 714-amino-acid polypeptide reads, in one-letter code: Hormonally up-regulated neu tumor-associated kinase (714 aa).

Residues 1–16 (MPAAAGDGLLGEPAAP) show a composition bias toward low complexity. The interval 1–28 (MPAAAGDGLLGEPAAPGGDGGAEDTTRP) is disordered. The Protein kinase domain maps to 62–320 (LIGSRKLGEG…IQQALANRWL (259 aa)). Residues 68–76 (LGEGSFAKV) and Lys91 each bind ATP. Asp186 acts as the Proton acceptor in catalysis. The span at 624–635 (HEEKNSPPKEEG) shows a compositional bias: basic and acidic residues. 2 disordered regions span residues 624–658 (HEEK…NCVK) and 674–714 (KRHQ…KGQC). Over residues 692 to 703 (SPLQPTAPSSLS) the composition is skewed to polar residues.

The protein belongs to the protein kinase superfamily. CAMK Ser/Thr protein kinase family. SNF1 subfamily.

The enzyme catalyses L-seryl-[protein] + ATP = O-phospho-L-seryl-[protein] + ADP + H(+). It carries out the reaction L-threonyl-[protein] + ATP = O-phospho-L-threonyl-[protein] + ADP + H(+). The sequence is that of Hormonally up-regulated neu tumor-associated kinase (Hunk) from Mus musculus (Mouse).